A 391-amino-acid polypeptide reads, in one-letter code: Ferrochelatase (391 aa).

Fe cation-binding residues include histidine 196 and glutamate 281.

It belongs to the ferrochelatase family.

The protein localises to the cytoplasm. It catalyses the reaction heme b + 2 H(+) = protoporphyrin IX + Fe(2+). It functions in the pathway porphyrin-containing compound metabolism; protoheme biosynthesis; protoheme from protoporphyrin-IX: step 1/1. Catalyzes the ferrous insertion into protoporphyrin IX. This Prochlorococcus marinus (strain MIT 9515) protein is Ferrochelatase.